Consider the following 246-residue polypeptide: Pyridoxine 5'-phosphate synthase (246 aa).

The 3-amino-2-oxopropyl phosphate site is built by Asn-8 and Arg-19. Residue His-44 is the Proton acceptor of the active site. Positions 46 and 51 each coordinate 1-deoxy-D-xylulose 5-phosphate. Residue Glu-76 is the Proton acceptor of the active site. Thr-106 contributes to the 1-deoxy-D-xylulose 5-phosphate binding site. His-198 serves as the catalytic Proton donor. 3-amino-2-oxopropyl phosphate-binding positions include Asp-199 and 221–222; that span reads GH.

It belongs to the PNP synthase family. Homooctamer; tetramer of dimers.

Its subcellular location is the cytoplasm. It carries out the reaction 3-amino-2-oxopropyl phosphate + 1-deoxy-D-xylulose 5-phosphate = pyridoxine 5'-phosphate + phosphate + 2 H2O + H(+). It participates in cofactor biosynthesis; pyridoxine 5'-phosphate biosynthesis; pyridoxine 5'-phosphate from D-erythrose 4-phosphate: step 5/5. Its function is as follows. Catalyzes the complicated ring closure reaction between the two acyclic compounds 1-deoxy-D-xylulose-5-phosphate (DXP) and 3-amino-2-oxopropyl phosphate (1-amino-acetone-3-phosphate or AAP) to form pyridoxine 5'-phosphate (PNP) and inorganic phosphate. In Brucella abortus (strain S19), this protein is Pyridoxine 5'-phosphate synthase.